The primary structure comprises 347 residues: Protein RecA (347 aa).

Residue 65 to 72 (GPESSGKT) coordinates ATP. The span at 327–336 (KFEPTELSRE) shows a compositional bias: basic and acidic residues. The tract at residues 327 to 347 (KFEPTELSREEGDEDTLEDTM) is disordered. Over residues 337–347 (EGDEDTLEDTM) the composition is skewed to acidic residues.

The protein belongs to the RecA family.

The protein resides in the cytoplasm. Its function is as follows. Can catalyze the hydrolysis of ATP in the presence of single-stranded DNA, the ATP-dependent uptake of single-stranded DNA by duplex DNA, and the ATP-dependent hybridization of homologous single-stranded DNAs. It interacts with LexA causing its activation and leading to its autocatalytic cleavage. In Xylella fastidiosa (strain 9a5c), this protein is Protein RecA.